Consider the following 95-residue polypeptide: Aspartyl/glutamyl-tRNA(Asn/Gln) amidotransferase subunit C (95 aa).

It belongs to the GatC family. In terms of assembly, heterotrimer of A, B and C subunits.

The catalysed reaction is L-glutamyl-tRNA(Gln) + L-glutamine + ATP + H2O = L-glutaminyl-tRNA(Gln) + L-glutamate + ADP + phosphate + H(+). The enzyme catalyses L-aspartyl-tRNA(Asn) + L-glutamine + ATP + H2O = L-asparaginyl-tRNA(Asn) + L-glutamate + ADP + phosphate + 2 H(+). Functionally, allows the formation of correctly charged Asn-tRNA(Asn) or Gln-tRNA(Gln) through the transamidation of misacylated Asp-tRNA(Asn) or Glu-tRNA(Gln) in organisms which lack either or both of asparaginyl-tRNA or glutaminyl-tRNA synthetases. The reaction takes place in the presence of glutamine and ATP through an activated phospho-Asp-tRNA(Asn) or phospho-Glu-tRNA(Gln). This chain is Aspartyl/glutamyl-tRNA(Asn/Gln) amidotransferase subunit C, found in Alkalilimnicola ehrlichii (strain ATCC BAA-1101 / DSM 17681 / MLHE-1).